A 522-amino-acid chain; its full sequence is Protein DETOXIFICATION 31 (522 aa).

The next 12 helical transmembrane spans lie at 89–109 (GAVTQVFAGHISTLALAAVSI), 113–133 (VIAGFSFGIMLGMGSALETLC), 154–174 (VILSVTALFLSLIYIFAAPIL), 183–203 (ISAMAGIFSIYMIPQIFAYAI), 217–237 (IMVMAGISGVVLVIHSFFTWL), 249–269 (LALVLNTSWWVIVVAQLVYIF), 299–319 (AAMLCLEIWYFMALVLFAGYL), 324–344 (VSVAALSICMNILGWAAMVAF), 371–391 (VVAVILSTAIGMFIAAGLLFF), 415–435 (MLAFCIVINNVQPVLSGVAVG), 441–461 (VVAYVNIACYYLFGVPFGLLL), and 471–491 (GIWWGMVTGTFVQSIVLTWMI).

Belongs to the multi antimicrobial extrusion (MATE) (TC 2.A.66.1) family.

It localises to the membrane. Its function is as follows. Positively mediates root hair elongation. This Arabidopsis thaliana (Mouse-ear cress) protein is Protein DETOXIFICATION 31.